A 260-amino-acid polypeptide reads, in one-letter code: COP9 signalosome complex subunit 7 (260 aa).

The region spanning 1 to 159 is the PCI domain; sequence MDIEQKQAEI…RCFEVPFAAG (159 aa). The segment at 228–260 is disordered; that stretch reads IRGNKEMFGEPSGVMDYEEDGIRPKRRRHPVTR. The segment covering 251 to 260 has biased composition (basic residues); the sequence is PKRRRHPVTR.

This sequence belongs to the CSN7/EIF3M family. CSN7 subfamily. As to quaternary structure, component of the CSN complex, probably composed of CSN1, CSN2, CSN3, CSN4, CSN5 (CSN5A or CSN5B), CSN6 (CSN6A or CSN6B), CSN7 and CSN8. In the CSN complex, it probably interacts directly with CSN4. Interacts (via PCI domain) with CSN1 (via PCI domain) and CSN8 (via PCI domain), and (via C-terminal tail) with CSN6A, TSO2 and RNR2A. Cannot interact simultaneously with CSN1 and CSN8 to form ternary complexes. Also exists as a monomeric form. Binds to the translation initiation factors TIF3E1 and TIF3H1. Post-translationally, phosphorylated.

The protein localises to the cytoplasm. It is found in the nucleus. Its function is as follows. Component of the COP9 signalosome complex (CSN), a complex involved in various cellular and developmental processes such as photomorphogenesis and auxin and jasmonate responses. The CSN complex is an essential regulator of the ubiquitin (Ubl) conjugation pathway by mediating the deneddylation of the cullin subunits of SCF-type E3 ligase complexes, leading to decrease the Ubl ligase activity of SCF. It is involved in repression of photomorphogenesis in darkness by regulating the activity of COP1-containing Ubl ligase complexes. The complex is also required for degradation of IAA6 by regulating the activity of the Ubl ligase SCF-TIR complex. Regulates the TSO2 subcellular localization. May be involved in nucleic acid binding. The polypeptide is COP9 signalosome complex subunit 7 (CSN7) (Arabidopsis thaliana (Mouse-ear cress)).